Reading from the N-terminus, the 434-residue chain is Epimerase FSL3 (434 aa).

125–126 (GF) is a substrate binding site. The active-site Proton acceptor is the E392.

The protein belongs to the aldose epimerase family. In terms of assembly, monomer.

Its pathway is secondary metabolite biosynthesis. Epimerase; part of the gene cluster that mediates the biosynthesis of fusarielins F, G and H, decaketide compounds with 5 methylations and a decaline core that act as mycoestrogens as they stimulate growth of MCF-7 breast cancer cells. The initial compound in the pathway is produced by the reducing polyketide synthase FSL1. FSL1 lacks an active enoyl reductase (ER) domain and biosynthesis of fusarielins relies on the trans-acting enoyl reductase FSL5, before it is released through hydrolysis catalyzed by the thioesterase FSL2. Fusarielins F, G, and H have a C11=C12 cis double bond and is fully reduced between C10 and C11 and between C12 and C13. FSL3 can be involved in the formation of the C11=C12 cis double bond by moving a hypothetical C10=C11 or C12=C13 trans double bond to form prefusarielin. Prefusarielin is oxygenated at C15 and C16 by the cytochrome P450 monooxygenase FSL4, resulting in fusarielin F, which subsequently is epoxidized into fusarielin G by the same enzyme. The final step in the pathway is a reduction of the carboxylic acid moiety to yield fusarielin H via a still undetermined mechanism. The chain is Epimerase FSL3 from Gibberella zeae (strain ATCC MYA-4620 / CBS 123657 / FGSC 9075 / NRRL 31084 / PH-1) (Wheat head blight fungus).